A 406-amino-acid chain; its full sequence is uncharacterized protein (406 aa).

To S.pombe SpAC12C2.04.

The protein localises to the cytoplasm. It localises to the nucleus. This is an uncharacterized protein from Schizosaccharomyces pombe (strain 972 / ATCC 24843) (Fission yeast).